A 371-amino-acid chain; its full sequence is Serine/threonine-protein kinase 17B (371 aa).

Positions 33-293 constitute a Protein kinase domain; sequence TLTPKELGRG…AESCLSHSWL (261 aa). Residues 39-47 and lysine 62 contribute to the ATP site; that span reads LGRGKFAVV. The active-site Proton acceptor is the aspartate 158. Residues 308–345 form a disordered region; sequence SESSQTQDLSLRSSEDKTPKSCNGSCGDREDKENIPED. Positions 309–319 are enriched in polar residues; sequence ESSQTQDLSLR.

Belongs to the protein kinase superfamily. CAMK Ser/Thr protein kinase family. DAP kinase subfamily. In terms of assembly, interacts with CHP1; the interaction induces CHP1 to translocate from the Golgi to the nucleus. In terms of processing, autophosphorylated. In terms of tissue distribution, highly expressed in thymus, spleen, and testis, lower levels present in the brain.

The protein resides in the nucleus. It localises to the cell membrane. It is found in the endoplasmic reticulum-Golgi intermediate compartment. The enzyme catalyses L-seryl-[protein] + ATP = O-phospho-L-seryl-[protein] + ADP + H(+). It carries out the reaction L-threonyl-[protein] + ATP = O-phospho-L-threonyl-[protein] + ADP + H(+). Acts as a positive regulator of apoptosis. Phosphorylates myosin light chains. This Rattus norvegicus (Rat) protein is Serine/threonine-protein kinase 17B (Stk17b).